Reading from the N-terminus, the 136-residue chain is Peptide methionine sulfoxide reductase MsrB (136 aa).

A MsrB domain is found at 9–136 (DAEWKALLAE…NSASLDFKKK (128 aa)). Positions 53, 56, 102, and 105 each coordinate Zn(2+). Residue cysteine 125 is the Nucleophile of the active site.

This sequence belongs to the MsrB Met sulfoxide reductase family. Zn(2+) serves as cofactor.

It carries out the reaction L-methionyl-[protein] + [thioredoxin]-disulfide + H2O = L-methionyl-(R)-S-oxide-[protein] + [thioredoxin]-dithiol. The protein is Peptide methionine sulfoxide reductase MsrB of Variovorax paradoxus (strain S110).